Reading from the N-terminus, the 113-residue chain is Colipase (113 aa).

An N-terminal signal peptide occupies residues 1-18; it reads MEKVLVLLLVSLLAVAYA. Residues 19-23 constitute a propeptide, enterostatin, activation peptide; sequence APGPR. Cystine bridges form between Cys35–Cys46, Cys41–Cys57, Cys45–Cys79, Cys67–Cys87, and Cys81–Cys105.

Belongs to the colipase family. In terms of assembly, forms a 1:1 stoichiometric complex with pancreatic lipase. As to expression, expressed by the pancreas.

The protein resides in the secreted. Its function is as follows. Colipase is a cofactor of pancreatic lipase. It allows the lipase to anchor itself to the lipid-water interface. Without colipase the enzyme is washed off by bile salts, which have an inhibitory effect on the lipase. Enterostatin has a biological activity as a satiety signal. The sequence is that of Colipase from Mus musculus (Mouse).